A 989-amino-acid chain; its full sequence is Phosphoenolpyruvate carboxylase (989 aa).

Residues His-175 and Lys-630 contribute to the active site.

This sequence belongs to the PEPCase type 1 family. The cofactor is Mg(2+).

It carries out the reaction oxaloacetate + phosphate = phosphoenolpyruvate + hydrogencarbonate. Functionally, forms oxaloacetate, a four-carbon dicarboxylic acid source for the tricarboxylic acid cycle. The chain is Phosphoenolpyruvate carboxylase from Prochlorococcus marinus (strain MIT 9301).